Consider the following 396-residue polypeptide: Cathepsin D (396 aa).

The N-terminal stretch at 1–18 is a signal peptide; it reads MKMLLLCVFSALALTNDA. A propeptide spans 19–61 (activation peptide); the sequence is LVRIPLKKFRSIRRQLTDSGKRAEELLADHHSLKYNLSFPASN. The Peptidase A1 domain maps to 76-393; it reads YYGEIGLGTP…DRDANRVGFA (318 aa). The active site involves aspartate 94. Cysteine 107 and cysteine 114 are oxidised to a cystine. Asparagine 131 and asparagine 249 each carry an N-linked (GlcNAc...) asparagine glycan. Cysteine 272 and cysteine 276 are disulfide-bonded. Residue aspartate 281 is part of the active site. Cysteine 315 and cysteine 352 are joined by a disulfide.

The protein belongs to the peptidase A1 family. Monomer.

The protein resides in the lysosome. It catalyses the reaction Specificity similar to, but narrower than, that of pepsin A. Does not cleave the 4-Gln-|-His-5 bond in B chain of insulin.. With respect to regulation, inhibited by pepstatin. In terms of biological role, acid protease active in intracellular protein breakdown. This chain is Cathepsin D (ctsd), found in Chionodraco hamatus (Antarctic teleost icefish).